The chain runs to 203 residues: Glycerol-3-phosphate acyltransferase (203 aa).

4 consecutive transmembrane segments (helical) span residues 6-26 (LTLL…AVLV), 82-102 (AISL…PVFF), 118-138 (APIG…LVLI), and 141-161 (YSSL…WWLD).

This sequence belongs to the PlsY family. Probably interacts with PlsX.

Its subcellular location is the cell inner membrane. It carries out the reaction an acyl phosphate + sn-glycerol 3-phosphate = a 1-acyl-sn-glycero-3-phosphate + phosphate. It functions in the pathway lipid metabolism; phospholipid metabolism. Functionally, catalyzes the transfer of an acyl group from acyl-phosphate (acyl-PO(4)) to glycerol-3-phosphate (G3P) to form lysophosphatidic acid (LPA). This enzyme utilizes acyl-phosphate as fatty acyl donor, but not acyl-CoA or acyl-ACP. The protein is Glycerol-3-phosphate acyltransferase of Shewanella oneidensis (strain ATCC 700550 / JCM 31522 / CIP 106686 / LMG 19005 / NCIMB 14063 / MR-1).